An 85-amino-acid polypeptide reads, in one-letter code: Glutaredoxin 1 (85 aa).

The Glutaredoxin domain maps to 1 to 85 (MQTVIFGRSG…AAWVKENLDA (85 aa)). Cys-11 and Cys-14 are oxidised to a cystine.

The protein belongs to the glutaredoxin family. Monomer.

The disulfide bond functions as an electron carrier in the glutathione-dependent synthesis of deoxyribonucleotides by the enzyme ribonucleotide reductase. In addition, it is also involved in reducing some disulfides in a coupled system with glutathione reductase. This Shigella flexneri protein is Glutaredoxin 1 (grxA).